A 104-amino-acid chain; its full sequence is MRFFSYLGLLLAGLASLQGFSTDNPLEEELRCWCLYVKNCRFCWACQDGLCKNKVLKDMPPVQEHSYPMEYCMLHRQCKYITDGPIFQVECTMQTCDAIRLLNA.

The first 19 residues, 1 to 19 (MRFFSYLGLLLAGLASLQG), serve as a signal peptide directing secretion.

This sequence belongs to the asfivirus MGF 110 family.

In terms of biological role, plays a role in virus cell tropism, and may be required for efficient virus replication in macrophages. The chain is Protein MGF 110-2L from African swine fever virus (isolate Tick/South Africa/Pretoriuskop Pr4/1996) (ASFV).